The primary structure comprises 169 residues: UPF0303 protein Oant_1766 (169 aa).

Belongs to the UPF0303 family.

This Brucella anthropi (strain ATCC 49188 / DSM 6882 / CCUG 24695 / JCM 21032 / LMG 3331 / NBRC 15819 / NCTC 12168 / Alc 37) (Ochrobactrum anthropi) protein is UPF0303 protein Oant_1766.